A 100-amino-acid chain; its full sequence is C-X-C motif chemokine 2 (100 aa).

The signal sequence occupies residues Met1–Gly27. 2 disulfide bridges follow: Cys36–Cys62 and Cys38–Cys78.

The protein belongs to the intercrine alpha (chemokine CxC) family. As to quaternary structure, homotetramer.

The protein localises to the secreted. In terms of biological role, chemotactic for human polymorphonuclear leukocytes but does not induce chemokinesis or an oxidative burst. This chain is C-X-C motif chemokine 2 (Cxcl2), found in Mus musculus (Mouse).